Reading from the N-terminus, the 513-residue chain is MNSSNAIFKTFLGSAPEWYKLCIITFLVINPLIYFFVSPFIAGWTLVAEFIFTLSMALKCYPLQPGGLLAIEAVAIGMTSPHHVKHEIIANFEVILLLMFMVAGIYFMKQLLLYVFTKLLIVIRSKKVLSLSFCLSAAFLSAFLDALTVIAVIISVGTGFYGVYHKVASGSTFEDSTDISNDDKIITNKKILEQFRAFLRSLLMHAAVGSALGGVMTMVGEPQNLIIASQAEWGFIEFLIRVAPVSLPVLICGIATCLLLEHFKVFGYGERLPRRVWGVLARYNVLQEQHMTKQDRVKMAIQALAGIWLIVGLALHLADVGIIGLTIIIICTAFCGITDEHAIGRSFQEPMPFTALIVVFFTIVAVIVDLKLFEPIINFVLSADPHSQLALFYVFNGLLSMISDNVFVGTVYMNETKAALTSGFISREQFDLIAVAINTGTNLPSVATPNGQAAFLFLLTSPFAPLIRLSYSRMIYMALPYTIVLSIVGFFALEYLLPPLTELMTNWGWLIAR.

Helical transmembrane passes span 21-41, 43-63, 88-108, 137-157, 202-222, 235-255, 299-318, 322-344, 350-370, 389-409, and 477-497; these read LCII…SPFI, GWTL…CYPL, IIAN…IYFM, AAFL…ISVG, LLMH…VGEP, FIEF…CGIA, MAIQ…LHLA, IIGL…HAIG, PMPF…IVDL, LALF…VFVG, and MALP…EYLL.

The protein belongs to the NhaB Na(+)/H(+) (TC 2.A.34) antiporter family.

It is found in the cell inner membrane. It catalyses the reaction 2 Na(+)(in) + 3 H(+)(out) = 2 Na(+)(out) + 3 H(+)(in). Na(+)/H(+) antiporter that extrudes sodium in exchange for external protons. In Haemophilus ducreyi (strain 35000HP / ATCC 700724), this protein is Na(+)/H(+) antiporter NhaB.